The sequence spans 81 residues: Short neurotoxin 2 (81 aa).

An N-terminal signal peptide occupies residues 1-21 (MKTLLLTLVVVTIVCLDLGYT). Cystine bridges form between Cys-24–Cys-43, Cys-38–Cys-60, Cys-62–Cys-73, and Cys-74–Cys-79.

This sequence belongs to the three-finger toxin family. Short-chain subfamily. Type I alpha-neurotoxin sub-subfamily. Expressed by the venom gland.

It is found in the secreted. Functionally, binds to muscle nicotinic acetylcholine receptor (nAChR) and inhibit acetylcholine from binding to the receptor, thereby impairing neuromuscular transmission. This is Short neurotoxin 2 from Cryptophis nigrescens (Eastern small-eyed snake).